A 630-amino-acid polypeptide reads, in one-letter code: Cytochrome B pre-mRNA-processing protein 2 (630 aa).

It is found in the mitochondrion. Functionally, appears to be specifically required for the splicing of the terminal intron (bI5) of the cytochrome b pre-mRNA. Can also stimulates the splicing of the omega intron of the precursor of large ribosomal RNA. The polypeptide is Cytochrome B pre-mRNA-processing protein 2 (CBP2) (Saccharomyces paradoxus (Yeast)).